A 222-amino-acid chain; its full sequence is Probable septum site-determining protein MinC (222 aa).

The protein belongs to the MinC family. In terms of assembly, interacts with MinD and FtsZ.

In terms of biological role, cell division inhibitor that blocks the formation of polar Z ring septums. Rapidly oscillates between the poles of the cell to destabilize FtsZ filaments that have formed before they mature into polar Z rings. Prevents FtsZ polymerization. This is Probable septum site-determining protein MinC from Lysinibacillus sphaericus (strain C3-41).